A 237-amino-acid chain; its full sequence is Phosphoribosylaminoimidazole-succinocarboxamide synthase (237 aa).

It belongs to the SAICAR synthetase family.

It catalyses the reaction 5-amino-1-(5-phospho-D-ribosyl)imidazole-4-carboxylate + L-aspartate + ATP = (2S)-2-[5-amino-1-(5-phospho-beta-D-ribosyl)imidazole-4-carboxamido]succinate + ADP + phosphate + 2 H(+). It functions in the pathway purine metabolism; IMP biosynthesis via de novo pathway; 5-amino-1-(5-phospho-D-ribosyl)imidazole-4-carboxamide from 5-amino-1-(5-phospho-D-ribosyl)imidazole-4-carboxylate: step 1/2. The polypeptide is Phosphoribosylaminoimidazole-succinocarboxamide synthase (Edwardsiella ictaluri (strain 93-146)).